Reading from the N-terminus, the 485-residue chain is D-alanine--D-alanyl carrier protein ligase (485 aa).

Residue 144–145 coordinates ATP; it reads TS. A D-alanine-binding site is contributed by D189. 284 to 289 is an ATP binding site; it reads NTYGPT. A D-alanine-binding site is contributed by V293. ATP contacts are provided by D365 and K473. Residue K473 participates in D-alanine binding.

It belongs to the ATP-dependent AMP-binding enzyme family. DltA subfamily.

It is found in the cytoplasm. It carries out the reaction holo-[D-alanyl-carrier protein] + D-alanine + ATP = D-alanyl-[D-alanyl-carrier protein] + AMP + diphosphate. Its pathway is cell wall biogenesis; lipoteichoic acid biosynthesis. Its function is as follows. Catalyzes the first step in the D-alanylation of lipoteichoic acid (LTA), the activation of D-alanine and its transfer onto the D-alanyl carrier protein (Dcp) DltC. In an ATP-dependent two-step reaction, forms a high energy D-alanyl-AMP intermediate, followed by transfer of the D-alanyl residue as a thiol ester to the phosphopantheinyl prosthetic group of the Dcp. D-alanylation of LTA plays an important role in modulating the properties of the cell wall in Gram-positive bacteria, influencing the net charge of the cell wall. In Staphylococcus aureus (strain bovine RF122 / ET3-1), this protein is D-alanine--D-alanyl carrier protein ligase.